Here is a 276-residue protein sequence, read N- to C-terminus: MKLTKLFGLATLVSAVALAGCKDDKPAAAAAPQEPAARKLTVGVMTGAEAQVTEVAAKIAKEKYNIDVKLVEFTEYTQPNDALTKGDLDANAFQHKPYMDKEVEQRGYKLAIVGNTFVFPIAAYSKKIKNVSELQDGATVAVPNNPSNLGRALLLLEKQGLIKLKDPSNLFSTSIDVIENPKNLQIKEVEGSLLPRMLDDVDFAIINNNYAVQQGLTAEKDGIFVEDKDSPYVNLVVSREDNKDNEAIKDFVKAFQTEEVYQEALKHFQGGVVKGW.

An N-terminal signal peptide occupies residues 1-20 (MKLTKLFGLATLVSAVALAG). Cys-21 carries N-palmitoyl cysteine lipidation. Cys-21 carries the S-diacylglycerol cysteine lipid modification.

The protein belongs to the NlpA lipoprotein family.

The protein resides in the cell outer membrane. This protein is a component of a D-methionine permease, a binding protein-dependent, ATP-driven transport system. The polypeptide is Probable D-methionine-binding lipoprotein MetQ (metQ) (Pasteurella multocida (strain Pm70)).